The chain runs to 93 residues: uncharacterized protein (93 aa).

The chain crosses the membrane as a helical span at residues 68 to 88; sequence WLVTVVLANGVVSLFLLGGLI.

It is found in the membrane. This is an uncharacterized protein from Mycoplasma pneumoniae (strain ATCC 29342 / M129 / Subtype 1) (Mycoplasmoides pneumoniae).